Reading from the N-terminus, the 411-residue chain is LIM domain-binding protein 1 (411 aa).

Disordered stretches follow at residues 284-330 (PPAE…TFAL) and 367-411 (DAAN…QASQ). Low complexity predominate over residues 302–318 (SGGSTMSSGGGNTNNSN). The 40-residue stretch at 336–375 (DVMVVGEPTLMGGEFGDEDERLITRLENTQFDAANGIDDE) folds into the LIM interaction domain (LID) domain.

It belongs to the LDB family. Forms homodimers and heterodimers. First expressed at stages 15-16 in presumptive limb mesoderm. As limb outgrowth proceeds, expressed in the entire limb bud, concentrating in the distal mesoderm throughout limb development. Both hindlimbs and forelimbs exhibit similar expression patterns.

The protein localises to the nucleus. Binds to the LIM domain of a wide variety of LIM domain-containing transcription factors. The sequence is that of LIM domain-binding protein 1 from Gallus gallus (Chicken).